Here is a 510-residue protein sequence, read N- to C-terminus: MEEIQRYLQLERYHQHDFLYPLIFQEYIYTFAHDRDYNRSILSENSCYEKKFSLLIVKRLITRMYQQNHFLIFSNDSNQNPFEGRNKNFYFQIISEGFALIAEIPFSRRLRASLKEKKIVKFQNLRSIQAIFSFLEDSFSHLNFVLDILIPHSVHVEILVQTLRYWVKDASSLHLLRFFLNEYCNSNSLITPKEVSSSFSTKRNKRLFLFLYNSHVCEYESILVFLRKQSSHLRSTSSGLLLERIYFYAKIERLVNLFVKVKGFQVNLWLVKEPCMHYVRYQRKSIWASNGASLLIKKWKSYLVAFWQWHFSMWFHPRRISINQLSNHSLEFLGYHSSVRMNPSVVRSQSLENSFLINNALKKFDTLVPIISLIAALAQAKFCNVLGDPISKPVWADLSDSNIIYRFGHICRNLSHYYSGSSKKNSLYRIKYILRLSCARTLARKHKSTVRAFLKKLGSELLEEFLMSEKDVLSLTFPKASSIFGGGYRRQIWYLDIISINDLANHKSKF.

Belongs to the intron maturase 2 family. MatK subfamily.

The protein localises to the plastid. Its subcellular location is the chloroplast. Its function is as follows. Usually encoded in the trnK tRNA gene intron. Probably assists in splicing its own and other chloroplast group II introns. In Gratiola officinalis (Hedgehyssop), this protein is Maturase K.